Reading from the N-terminus, the 264-residue chain is S-adenosylmethionine decarboxylase proenzyme (264 aa).

Residue Ser113 is the Schiff-base intermediate with substrate; via pyruvic acid of the active site. Pyruvic acid (Ser); by autocatalysis is present on Ser113. The active-site Proton acceptor; for processing activity is the His118. Cys141 acts as the Proton donor; for catalytic activity in catalysis.

This sequence belongs to the prokaryotic AdoMetDC family. Type 2 subfamily. Heterooctamer of four alpha and four beta chains arranged as a tetramer of alpha/beta heterodimers. Pyruvate is required as a cofactor. Is synthesized initially as an inactive proenzyme. Formation of the active enzyme involves a self-maturation process in which the active site pyruvoyl group is generated from an internal serine residue via an autocatalytic post-translational modification. Two non-identical subunits are generated from the proenzyme in this reaction, and the pyruvate is formed at the N-terminus of the alpha chain, which is derived from the carboxyl end of the proenzyme. The post-translation cleavage follows an unusual pathway, termed non-hydrolytic serinolysis, in which the side chain hydroxyl group of the serine supplies its oxygen atom to form the C-terminus of the beta chain, while the remainder of the serine residue undergoes an oxidative deamination to produce ammonia and the pyruvoyl group blocking the N-terminus of the alpha chain.

It carries out the reaction S-adenosyl-L-methionine + H(+) = S-adenosyl 3-(methylsulfanyl)propylamine + CO2. It functions in the pathway amine and polyamine biosynthesis; S-adenosylmethioninamine biosynthesis; S-adenosylmethioninamine from S-adenosyl-L-methionine: step 1/1. Catalyzes the decarboxylation of S-adenosylmethionine to S-adenosylmethioninamine (dcAdoMet), the propylamine donor required for the synthesis of the polyamines spermine and spermidine from the diamine putrescine. The protein is S-adenosylmethionine decarboxylase proenzyme of Xanthomonas campestris pv. campestris (strain B100).